Here is a 375-residue protein sequence, read N- to C-terminus: Queuine tRNA-ribosyltransferase (375 aa).

The Proton acceptor role is filled by D89. Substrate is bound by residues 89-93 (DSGGF), D143, Q187, and G214. The segment at 245–251 (GVGKPED) is RNA binding. The active-site Nucleophile is D264. An RNA binding; important for wobble base 34 recognition region spans residues 269-273 (TRNAR). Zn(2+)-binding residues include C302, C304, C307, and H333.

The protein belongs to the queuine tRNA-ribosyltransferase family. As to quaternary structure, homodimer. Within each dimer, one monomer is responsible for RNA recognition and catalysis, while the other monomer binds to the replacement base PreQ1. Zn(2+) is required as a cofactor.

The catalysed reaction is 7-aminomethyl-7-carbaguanine + guanosine(34) in tRNA = 7-aminomethyl-7-carbaguanosine(34) in tRNA + guanine. Its pathway is tRNA modification; tRNA-queuosine biosynthesis. Functionally, catalyzes the base-exchange of a guanine (G) residue with the queuine precursor 7-aminomethyl-7-deazaguanine (PreQ1) at position 34 (anticodon wobble position) in tRNAs with GU(N) anticodons (tRNA-Asp, -Asn, -His and -Tyr). Catalysis occurs through a double-displacement mechanism. The nucleophile active site attacks the C1' of nucleotide 34 to detach the guanine base from the RNA, forming a covalent enzyme-RNA intermediate. The proton acceptor active site deprotonates the incoming PreQ1, allowing a nucleophilic attack on the C1' of the ribose to form the product. After dissociation, two additional enzymatic reactions on the tRNA convert PreQ1 to queuine (Q), resulting in the hypermodified nucleoside queuosine (7-(((4,5-cis-dihydroxy-2-cyclopenten-1-yl)amino)methyl)-7-deazaguanosine). This Aliivibrio salmonicida (strain LFI1238) (Vibrio salmonicida (strain LFI1238)) protein is Queuine tRNA-ribosyltransferase.